Consider the following 137-residue polypeptide: Large ribosomal subunit protein uL16 (137 aa).

The protein belongs to the universal ribosomal protein uL16 family. In terms of assembly, part of the 50S ribosomal subunit.

In terms of biological role, binds 23S rRNA and is also seen to make contacts with the A and possibly P site tRNAs. The polypeptide is Large ribosomal subunit protein uL16 (Endomicrobium trichonymphae).